Consider the following 240-residue polypeptide: MKPDVLLYNSQHLINNITLYQLNHINIASFSFVFFSGLFTSFSPCLISILPICIMYISGEGQKLSQIDKLKNLFFFCLGAISSFTTLGLIATLLAKTYSQLFNGIPVISALVIIYMGFSLLNIVPLSTNNLNTRINNTNQNIKMYLSGVGIGLAISSCSTPIFVTLLIWVTSNHNLFIGLIFILIYSIGYIFPIIIGSLFSSRFLTTASSPFLNNLWAPFSGTILLSAGTFSLFSSILKY.

6 consecutive transmembrane segments (helical) span residues 32-52, 74-94, 104-124, 149-169, 176-196, and 218-238; these read FVFF…ILPI, FFFC…ATLL, GIPV…LNIV, VGIG…LLIW, LFIG…PIII, and APFS…SSIL.

It belongs to the DsbD family.

Its subcellular location is the plastid. The protein resides in the chloroplast membrane. Could be involved in cytochrome c synthesis. This chain is Putative cytochrome c-type biogenesis protein DbsD-like, found in Porphyra purpurea (Red seaweed).